Here is a 133-residue protein sequence, read N- to C-terminus: Small ribosomal subunit protein bS16 (133 aa).

Residues Glu-99–Ala-133 form a disordered region. A compositionally biased stretch (basic residues) spans Arg-109–Lys-123. The segment covering Lys-124–Ala-133 has biased composition (basic and acidic residues).

The protein belongs to the bacterial ribosomal protein bS16 family.

In Chlorobium limicola (strain DSM 245 / NBRC 103803 / 6330), this protein is Small ribosomal subunit protein bS16.